A 278-amino-acid chain; its full sequence is Large ribosomal subunit protein uL2 (278 aa).

2 disordered regions span residues 1–53 (MAIR…TTRH) and 224–278 (VVMN…NKKR). The segment covering 23–33 (EITRSTPEKSL) has biased composition (basic and acidic residues). The segment covering 258–267 (RNPNRYSNNM) has biased composition (polar residues). Residues 269 to 278 (VRRRRPNKKR) show a composition bias toward basic residues.

The protein belongs to the universal ribosomal protein uL2 family. As to quaternary structure, part of the 50S ribosomal subunit. Forms a bridge to the 30S subunit in the 70S ribosome.

One of the primary rRNA binding proteins. Required for association of the 30S and 50S subunits to form the 70S ribosome, for tRNA binding and peptide bond formation. It has been suggested to have peptidyltransferase activity; this is somewhat controversial. Makes several contacts with the 16S rRNA in the 70S ribosome. This is Large ribosomal subunit protein uL2 from Corynebacterium aurimucosum (strain ATCC 700975 / DSM 44827 / CIP 107346 / CN-1) (Corynebacterium nigricans).